We begin with the raw amino-acid sequence, 351 residues long: MNQDRKWNIVGGRVIKTGIAVFLTVLVCDFFNIPTIFAVITAIVTIEPTATDSIKKGLIRFPASTIGSAYAMTFTFFLGHQAISYALAAMFTIVACQKLRLHAGTLVATLTAVAMIPITANHYFTAFLIRLATTSTGIIVSTLVNFFIFPPHYTKMIFGCTEDLFAKTANIMEEWITALVAGKGVKKETAQDLSKLTLLLHKAIQFVQYEQKDWKYHQHTKKEMRSFLTMQKQLHILQQIIYHIDNLARVSIETCDWSQSEREILQRTIHSIIAILRNRCNEIDEEHFKLIAELDKQFWSYKNDLKDYKPNHYHHHFSSESIILFEVLSIHDMLEELKQISEKYEWENRFN.

4 helical membrane-spanning segments follow: residues 19-39, 74-94, 109-129, and 131-151; these read IAVF…IFAV, FTFF…FTIV, TLTA…AFLI, and LATT…IFPP.

The protein belongs to the UPF0421 family.

The protein localises to the cell membrane. This Bacillus cereus (strain ATCC 14579 / DSM 31 / CCUG 7414 / JCM 2152 / NBRC 15305 / NCIMB 9373 / NCTC 2599 / NRRL B-3711) protein is UPF0421 protein BC_2748.